Consider the following 20-residue polypeptide: Cytochrome c oxidase subunit 7B-heart, mitochondrial (20 aa).

The protein belongs to the cytochrome c oxidase VIIb family. In terms of assembly, component of the cytochrome c oxidase (complex IV, CIV), a multisubunit enzyme composed of 14 subunits. The complex is composed of a catalytic core of 3 subunits MT-CO1, MT-CO2 and MT-CO3, encoded in the mitochondrial DNA, and 11 supernumerary subunits COX4I, COX5A, COX5B, COX6A, COX6B, COX6C, COX7A, COX7B, COX7C, COX8 and NDUFA4, which are encoded in the nuclear genome. The complex exists as a monomer or a dimer and forms supercomplexes (SCs) in the inner mitochondrial membrane with NADH-ubiquinone oxidoreductase (complex I, CI) and ubiquinol-cytochrome c oxidoreductase (cytochrome b-c1 complex, complex III, CIII), resulting in different assemblies (supercomplex SCI(1)III(2)IV(1) and megacomplex MCI(2)III(2)IV(2)).

It localises to the mitochondrion inner membrane. It catalyses the reaction 4 Fe(II)-[cytochrome c] + O2 + 8 H(+)(in) = 4 Fe(III)-[cytochrome c] + 2 H2O + 4 H(+)(out). Its pathway is energy metabolism; oxidative phosphorylation. Functionally, component of the cytochrome c oxidase, the last enzyme in the mitochondrial electron transport chain which drives oxidative phosphorylation. The respiratory chain contains 3 multisubunit complexes succinate dehydrogenase (complex II, CII), ubiquinol-cytochrome c oxidoreductase (cytochrome b-c1 complex, complex III, CIII) and cytochrome c oxidase (complex IV, CIV), that cooperate to transfer electrons derived from NADH and succinate to molecular oxygen, creating an electrochemical gradient over the inner membrane that drives transmembrane transport and the ATP synthase. Cytochrome c oxidase is the component of the respiratory chain that catalyzes the reduction of oxygen to water. Electrons originating from reduced cytochrome c in the intermembrane space (IMS) are transferred via the dinuclear copper A center (CU(A)) of subunit 2 and heme A of subunit 1 to the active site in subunit 1, a binuclear center (BNC) formed by heme A3 and copper B (CU(B)). The BNC reduces molecular oxygen to 2 water molecules using 4 electrons from cytochrome c in the IMS and 4 protons from the mitochondrial matrix. The protein is Cytochrome c oxidase subunit 7B-heart, mitochondrial of Thunnus obesus (Bigeye tuna).